A 280-amino-acid polypeptide reads, in one-letter code: Phosphonates import ATP-binding protein PhnC (280 aa).

The 236-residue stretch at 4 to 239 (ITVTNLHKSY…VIDDIYGNIQ (236 aa)) folds into the ABC transporter domain. 36–43 (GESGAGKS) is a binding site for ATP. Positions 246-280 (GDDANADVAPTTSSDGGTDAAGGPDQQPASDPHLS) are disordered.

Belongs to the ABC transporter superfamily. Phosphonates importer (TC 3.A.1.9.1) family. The complex is composed of two ATP-binding proteins (PhnC), two transmembrane proteins (PhnE) and a solute-binding protein (PhnD).

It localises to the cell membrane. The enzyme catalyses phosphonate(out) + ATP + H2O = phosphonate(in) + ADP + phosphate + H(+). In terms of biological role, part of the ABC transporter complex PhnCDE involved in phosphonates import. Responsible for energy coupling to the transport system. This is Phosphonates import ATP-binding protein PhnC from Halobacterium salinarum (strain ATCC 700922 / JCM 11081 / NRC-1) (Halobacterium halobium).